Here is a 64-residue protein sequence, read N- to C-terminus: Large ribosomal subunit protein uL30 (64 aa).

Residues methionine 1–serine 22 form a disordered region.

Belongs to the universal ribosomal protein uL30 family. Part of the 50S ribosomal subunit.

The sequence is that of Large ribosomal subunit protein uL30 from Nitrobacter winogradskyi (strain ATCC 25391 / DSM 10237 / CIP 104748 / NCIMB 11846 / Nb-255).